The chain runs to 238 residues: Uridylate kinase (238 aa).

12–15 (KLSG) provides a ligand contact to ATP. Gly-54 contributes to the UMP binding site. Gly-55 and Arg-59 together coordinate ATP. UMP contacts are provided by residues Asp-74 and 135 to 142 (TGNPFFTT). ATP is bound by residues Thr-162, Tyr-168, and Asp-171.

The protein belongs to the UMP kinase family. Homohexamer.

The protein resides in the cytoplasm. The catalysed reaction is UMP + ATP = UDP + ADP. Its pathway is pyrimidine metabolism; CTP biosynthesis via de novo pathway; UDP from UMP (UMPK route): step 1/1. Its activity is regulated as follows. Inhibited by UTP. In terms of biological role, catalyzes the reversible phosphorylation of UMP to UDP. This chain is Uridylate kinase, found in Aromatoleum aromaticum (strain DSM 19018 / LMG 30748 / EbN1) (Azoarcus sp. (strain EbN1)).